A 134-amino-acid polypeptide reads, in one-letter code: Methylmalonyl-CoA decarboxylase subunit gamma (134 aa).

Positions 28–38 are enriched in low complexity; that stretch reads APAARPAAAPA. A disordered region spans residues 28-67; the sequence is APAARPAAAPAPAAPKPAAAPAPAPAPKTTAAGAGAGANT. A compositionally biased stretch (pro residues) spans 39-53; it reads PAAPKPAAAPAPAPA. Low complexity predominate over residues 54–67; that stretch reads PKTTAAGAGAGANT. Residues 58 to 134 enclose the Biotinyl-binding domain; sequence AAGAGAGANT…NAGDILVVLS (77 aa). Lys-100 is subject to N6-biotinyllysine.

The methylmalonyl-CoA decarboxylase is composed of four subunits: the carboxyltransferase alpha subunit (MmdA), the tunnel beta subunit (MmdB), the biotin-containing gamma subunit (MmdC) and the delta subunit (MmdD). Biotin is required as a cofactor.

It is found in the cell membrane. The catalysed reaction is (S)-methylmalonyl-CoA + Na(+)(in) + H(+)(out) = propanoyl-CoA + Na(+)(out) + CO2. In terms of biological role, biotin-containing subunit of the sodium ion pump methylmalonyl-CoA decarboxylase, which converts the chemical energy of a decarboxylation reaction into an electrochemical gradient of Na(+) ions across the cytoplasmic membrane, thereby creating a sodium ion motive force that is used for ATP synthesis. This is Methylmalonyl-CoA decarboxylase subunit gamma from Propionigenium modestum.